We begin with the raw amino-acid sequence, 264 residues long: MLSHSAMVKQRKQQASAITKEIHGHDVDGMDLGKKVSIPRDIMIEELSHFSNRGARLFKMRQRRSDKYTFENFQYESRAQINHNIAMQNGRVDGSNLEGGSQQGPSTPPNTPDPRSPPNPENIAPGYSGPLKEIPPERFNTTAVPKYYRSPWEQAIGSDPELLEALYPKLFKPEGKAELRDYRSFNRVATPFGGFEKASKMVKFKVPDFELLLLTDPRFLAFANPLSGRRCFNRAPKGWVSENIPVVITTEPTEDATVPESDDL.

Arg53 carries the post-translational modification Omega-N-methylarginine. Positions 90 to 135 (GRVDGSNLEGGSQQGPSTPPNTPDPRSPPNPENIAPGYSGPLKEIP) are disordered. A Phosphoserine modification is found at Ser101. A compositionally biased stretch (pro residues) spans 106–120 (STPPNTPDPRSPPNP). 2 positions are modified to phosphothreonine: Thr107 and Thr111. Ser116 is modified (phosphoserine).

The protein belongs to the myozenin family. Interacts via its C-terminus with spectrin repeats 3 and 4 of ACTN2. Interacts with ACTN1, LDB3, MYOT and PPP3CA. As to expression, expressed specifically in heart and skeletal muscle. In skeletal muscle, localized to the soleus and plantaris muscles, which are predominantly composed of slow-twitch fibers.

Its subcellular location is the cytoplasm. It is found in the myofibril. The protein localises to the sarcomere. The protein resides in the z line. Its function is as follows. Myozenins may serve as intracellular binding proteins involved in linking Z line proteins such as alpha-actinin, gamma-filamin, TCAP/telethonin, LDB3/ZASP and localizing calcineurin signaling to the sarcomere. Plays an important role in the modulation of calcineurin signaling. May play a role in myofibrillogenesis. The protein is Myozenin-2 of Mus musculus (Mouse).